The primary structure comprises 485 residues: Adenosylhomocysteinase (485 aa).

Substrate-binding residues include Thr-64, Asp-139, and Glu-205. Position 206-208 (206-208 (TTT)) interacts with NAD(+). Positions 235 and 239 each coordinate substrate. Residues Asn-240, 269–274 (GYGDVG), Glu-292, Asn-327, 348–350 (IGH), and Asn-397 contribute to the NAD(+) site.

Belongs to the adenosylhomocysteinase family. NAD(+) serves as cofactor.

It catalyses the reaction S-adenosyl-L-homocysteine + H2O = L-homocysteine + adenosine. It functions in the pathway amino-acid biosynthesis; L-homocysteine biosynthesis; L-homocysteine from S-adenosyl-L-homocysteine: step 1/1. Its function is as follows. Adenosylhomocysteine is a competitive inhibitor of S-adenosyl-L-methionine-dependent methyl transferase reactions; therefore adenosylhomocysteinase may play a key role in the control of methylations via regulation of the intracellular concentration of adenosylhomocysteine. This is Adenosylhomocysteinase (SAHH) from Nicotiana sylvestris (Wood tobacco).